A 472-amino-acid chain; its full sequence is UDP-N-acetylmuramate--L-alanine ligase (472 aa).

Gly-122–Thr-128 is an ATP binding site.

The protein belongs to the MurCDEF family.

The protein localises to the cytoplasm. The enzyme catalyses UDP-N-acetyl-alpha-D-muramate + L-alanine + ATP = UDP-N-acetyl-alpha-D-muramoyl-L-alanine + ADP + phosphate + H(+). It participates in cell wall biogenesis; peptidoglycan biosynthesis. Functionally, cell wall formation. This Thermobifida fusca (strain YX) protein is UDP-N-acetylmuramate--L-alanine ligase.